Reading from the N-terminus, the 237-residue chain is MDDPFSTLAPRRGTQPLLSNWATIGISELHGGALGWGSWWSNLSRLGSSFGSNLKNLGLKAWNSSTGQALRQHLKDTNLQHKVVEGLSTGIHGAVDIARQEVDRQLAKRLENYEPPRVASTEETVDDVKTVALPSKEDESERVLVTKIREPPPPYDAVFGPAPSAETNKKQKFEETLQNAGLVSSPPAPIAAPAAIAVPAQTTMSHPASSRRRHHWQGTLDSIMGLGLQPIKRRRCF.

Residues 1 to 32 (MDDPFSTLAPRRGTQPLLSNWATIGISELHGG) constitute a propeptide that is removed on maturation. Positions 33 to 57 (ALGWGSWWSNLSRLGSSFGSNLKNL) are amphipathic alpha-helix essential for membrane lytic activity. The interval 35–56 (GWGSWWSNLSRLGSSFGSNLKN) is involved in endosomal membrane lysis. An interaction with hexon protein region spans residues 51–77 (GSNLKNLGLKAWNSSTGQALRQHLKDT). Residues 70–79 (LRQHLKDTNL) carry the Nuclear export signal motif. T146 is subject to Phosphothreonine; by host. The short motif at 218-229 (GTLDSIMGLGLQ) is the Nuclear export signal element. The interaction with hexon protein stretch occupies residues 220–226 (LDSIMGL). A binds to importin alpha/beta, involved in hexon nuclear import region spans residues 227–237 (GLQPIKRRRCF). A Nuclear localization signal motif is present at residues 232–235 (KRRR).

It belongs to the adenoviridae protein VI family. As to quaternary structure, interacts with hexon protein; this interaction allows nuclear import of hexon trimers and possibly pre-capsid assembly. Interacts (via C-terminal NLS) with importin alpha/beta. In terms of assembly, interacts (via PPxY motif) with host NEDD4 ubiquitine ligase; this interaction might play a role in virus intracellular transport during entry. Part of a complex composed of the core-capsid bridging protein, the endosome lysis protein VI and the hexon-linking protein VIII; these interactions bridge the virus core to the capsid. Interacts with peripentonal hexons; this interaction stabilizes the capsid by gluing two peripentonal hexons together and joining them with an adjacent group-of-nine hexon. Heterodimer with the viral protease; disulfide-linked. Interacts with the viral protease. Ubiquitinated by Nedd4 following partial capsid disassembly; which might play a role in intracellular virus movement during entry. In terms of processing, contains the major nuclear import and export signals. Proteolytically removed during virion maturation. The processing of the C-terminus turns the precursor into a mature viral structural protein and abrogates its ability to promote hexon import and act as a potential chaperone protein.

It localises to the host nucleus. The protein localises to the host cytoplasm. Its subcellular location is the virion. In terms of biological role, during virus assembly, promotes hexon trimers nuclear import through nuclear pore complexes via an importin alpha/beta-dependent mechanism. By analogy to herpesviruses capsid assembly, might act as a chaperone to promote the formation of the icosahedral capsid. Structural component of the virion that provides increased stability to the particle shell through its interaction with the core-capsid bridging protein and the hexon-linking protein VIII. Fibers shedding during virus entry into host cell allows the endosome lysis protein to be exposed as a membrane-lytic peptide. Exhibits pH-independent membrane fragmentation activity and probably mediates viral rapid escape from host endosome via organellar membrane lysis. It is not clear if it then remains partially associated with the capsid and involved in the intracellular microtubule-dependent transport of capsid to the nucleus, or if it is lost during endosomal penetration. Its function is as follows. Cofactor that activates the viral protease. Binds to viral protease in a 1:1 ratio. The chain is Pre-protein VI from Mus musculus (Mouse).